A 347-amino-acid polypeptide reads, in one-letter code: Biotin synthase (347 aa).

Residues 40–258 (AQVQVSTLLS…IAVARIVMPR (219 aa)) form the Radical SAM core domain. [4Fe-4S] cluster-binding residues include Cys55, Cys59, and Cys62. [2Fe-2S] cluster contacts are provided by Cys99, Cys130, Cys190, and Arg262.

This sequence belongs to the radical SAM superfamily. Biotin synthase family. Homodimer. It depends on [4Fe-4S] cluster as a cofactor. [2Fe-2S] cluster serves as cofactor.

The catalysed reaction is (4R,5S)-dethiobiotin + (sulfur carrier)-SH + 2 reduced [2Fe-2S]-[ferredoxin] + 2 S-adenosyl-L-methionine = (sulfur carrier)-H + biotin + 2 5'-deoxyadenosine + 2 L-methionine + 2 oxidized [2Fe-2S]-[ferredoxin]. The protein operates within cofactor biosynthesis; biotin biosynthesis; biotin from 7,8-diaminononanoate: step 2/2. Catalyzes the conversion of dethiobiotin (DTB) to biotin by the insertion of a sulfur atom into dethiobiotin via a radical-based mechanism. This Stenotrophomonas maltophilia (strain R551-3) protein is Biotin synthase.